A 197-amino-acid chain; its full sequence is Nucleoid occlusion factor SlmA (197 aa).

The 61-residue stretch at 7–67 (INRREHILQC…GLIEFIEESL (61 aa)) folds into the HTH tetR-type domain. Positions 30-49 (TTAKLASEVGVSEAALYRHF) form a DNA-binding region, H-T-H motif. The stretch at 109 to 136 (DALLGENERLRSRISNLFAKIETQLKQI) forms a coiled coil.

It belongs to the nucleoid occlusion factor SlmA family. In terms of assembly, homodimer. Interacts with FtsZ.

It is found in the cytoplasm. Its subcellular location is the nucleoid. Its function is as follows. Required for nucleoid occlusion (NO) phenomenon, which prevents Z-ring formation and cell division over the nucleoid. Acts as a DNA-associated cell division inhibitor that binds simultaneously chromosomal DNA and FtsZ, and disrupts the assembly of FtsZ polymers. SlmA-DNA-binding sequences (SBS) are dispersed on non-Ter regions of the chromosome, preventing FtsZ polymerization at these regions. This is Nucleoid occlusion factor SlmA from Shewanella baltica (strain OS223).